A 941-amino-acid chain; its full sequence is Zinc finger protein 507 (941 aa).

Residue S95 is modified to Phosphoserine. C2H2-type zinc fingers lie at residues 122 to 144 (YQCS…VKQH) and 152 to 175 (LMCS…VSEH). Residues 165–177 (QELEAHVVSEHEN) show a composition bias toward basic and acidic residues. The disordered stretch occupies residues 165–198 (QELEAHVVSEHENSASSQARSSPSGQGATERKSE). A compositionally biased stretch (low complexity) spans 178–192 (SASSQARSSPSGQGA). The C2H2-type 3 zinc-finger motif lies at 237-259 (YRCLFCSYTCGQQRMLKTHAWKH). A Phosphoserine modification is found at S415. The segment at 455 to 477 (ELSKGLAPDENAPPGRRRTNSES) is disordered. 5 consecutive C2H2-type zinc fingers follow at residues 630 to 652 (YRCR…LRVH), 658 to 680 (YQCP…MINH), 686 to 709 (HQCK…REQH), 746 to 768 (YRCD…RRVH), and 774 to 796 (YRCS…MWKH). Positions 823–856 (GKSRGKPLLTSSEERTGPTTGSPENLVSSSELTS) are disordered. Polar residues predominate over residues 839–856 (GPTTGSPENLVSSSELTS). Residues 899 to 921 (FCCCICGFESTSKESLLDHMKEH) form a C2H2-type 9 zinc finger.

The protein belongs to the krueppel C2H2-type zinc-finger protein family.

It is found in the nucleus. Its function is as follows. May be involved in transcriptional regulation. The sequence is that of Zinc finger protein 507 (Znf507) from Mus musculus (Mouse).